A 161-amino-acid polypeptide reads, in one-letter code: Lipoprotein signal peptidase (161 aa).

3 consecutive transmembrane segments (helical) span residues 4 to 24, 61 to 81, and 87 to 107; these read LLVV…WSKY, KMIF…YLLI, and SIWY…NFID. Residues Asp116 and Asp132 contribute to the active site. Residues 127 to 147 form a helical membrane-spanning segment; sequence IFNVADSTLVVGVICIFIYLI.

Belongs to the peptidase A8 family.

The protein resides in the cell membrane. It catalyses the reaction Release of signal peptides from bacterial membrane prolipoproteins. Hydrolyzes -Xaa-Yaa-Zaa-|-(S,diacylglyceryl)Cys-, in which Xaa is hydrophobic (preferably Leu), and Yaa (Ala or Ser) and Zaa (Gly or Ala) have small, neutral side chains.. The protein operates within protein modification; lipoprotein biosynthesis (signal peptide cleavage). Functionally, this protein specifically catalyzes the removal of signal peptides from prolipoproteins. The protein is Lipoprotein signal peptidase of Enterococcus faecalis (strain ATCC 700802 / V583).